Reading from the N-terminus, the 1178-residue chain is Integrin alpha-2 (1178 aa).

An N-terminal signal peptide occupies residues 1–26 (MGPGQAGGALLLRLLMLVQGILNCLA). Over 27–1129 (YNVGLPGAKI…KPTEKAEVPT (1103 aa)) the chain is Extracellular. 2 FG-GAP repeats span residues 31 to 89 (LPGA…TATC) and 98 to 158 (ASIS…FLTS). Cys-80 and Cys-89 form a disulfide bridge. N-linked (GlcNAc...) asparagine glycosylation is found at Asn-102 and Asn-109. In terms of domain architecture, VWFA spans 185 to 362 (WEAVKNFLVK…TLGEQIFSIE (178 aa)). 5 FG-GAP repeats span residues 363–417 (GTVQ…VIFP), 420–472 (AFDQ…KQGN), 474–536 (TVIQ…ILNQ), 537–595 (HQFL…TIRT), and 601–661 (ILGS…FTPD). Residues Asn-429, Asn-457, and Asn-472 are each glycosylated (N-linked (GlcNAc...) asparagine). The Cell attachment site motif lies at 480–482 (RGD). Ca(2+)-binding residues include Asp-496, Asp-498, Asp-500, Asp-504, Asp-560, Asn-562, Asp-564, Asp-568, Asp-624, Asn-626, Asp-628, and Asp-632. Intrachain disulfides connect Cys-677-Cys-734, Cys-786-Cys-792, Cys-862-Cys-873, Cys-1016-Cys-1047, and Cys-1052-Cys-1057. An N-linked (GlcNAc...) asparagine glycan is attached at Asn-696. Asn-1054, Asn-1071, and Asn-1078 each carry an N-linked (GlcNAc...) asparagine glycan. The chain crosses the membrane as a helical span at residues 1130–1151 (GVIIGSIIAGILLLLAMTAGLW). Residues 1152–1178 (KLGFFKRQYKKMGQNPDEMDETTELNS) are Cytoplasmic-facing. Residues 1154–1158 (GFFKR) carry the GFFKR motif motif.

It belongs to the integrin alpha chain family. As to quaternary structure, heterodimer of an alpha and a beta subunit. Alpha-2 associates with beta-1. Interacts with HPS5 and RAB21.

Its subcellular location is the membrane. Functionally, integrin alpha-2/beta-1 is a collagen receptor, being responsible for adhesion of platelets and other cells to collagens, modulation of collagen and collagenase gene expression, force generation and organization of newly synthesized extracellular matrix. It is also a receptor for laminins, collagen C-propeptides and E-cadherin. Mice homozygous for a null mutation in the alpha-2 die very early in embryogenesis. The chain is Integrin alpha-2 (Itga2) from Mus musculus (Mouse).